Consider the following 418-residue polypeptide: Voltage-gated ClC-type chloride channel ClcB (418 aa).

A run of 10 helical transmembrane segments spans residues 5 to 25 (LLIATVVGILAAFAVAGFRHA), 54 to 74 (LLTPALGGLAAGLLLMGWQKF), 146 to 166 (LWIACGAAAGMAAAYRAPLAG), 168 to 188 (LFIAEVLFGTMMLASLGPVII), 222 to 242 (ALIISTGVLAGLCGPLLLTLM), 258 to 278 (WQLALGGLIVGLLSLFTPAVW), 291 to 311 (APPLLMIIAGIFLCKLCAVLA), 316 to 336 (GAPGGVFTPTLFIGLAIGMLY), 352 to 372 (LLLGLTGMATLLAATTHAPIM), and 380 to 400 (MTGEYQLLPGLLIACVIASVI).

It belongs to the chloride channel (TC 2.A.49) family. ClcB subfamily.

It is found in the cell inner membrane. Its function is as follows. Probably acts as an electrical shunt for an outwardly-directed proton pump that is linked to amino acid decarboxylation, as part of the extreme acid resistance (XAR) response. In Escherichia coli (strain ATCC 8739 / DSM 1576 / NBRC 3972 / NCIMB 8545 / WDCM 00012 / Crooks), this protein is Voltage-gated ClC-type chloride channel ClcB.